The primary structure comprises 208 residues: Histone H1t (208 aa).

Positions 1-12 (MSETAPAASSTL) are enriched in polar residues. Residues 1-39 (MSETAPAASSTLVPAPVEKPSSKRRGKKPGLAPARKPRG) are disordered. Ser9 carries the phosphoserine modification. Residues 38-111 (RGFSVSKLIP…GASGSFKLSK (74 aa)) form the H15 domain. A Citrulline modification is found at Arg56. The disordered stretch occupies residues 95 to 208 (LVQTKGTGAS…TDLRKAAGRK (114 aa)). Basic residues predominate over residues 121-134 (KGKKSASAKAKKMG). At Ser141 the chain carries Phosphoserine. The segment covering 143–154 (KSSKTKAVKKPK) has biased composition (basic residues). Thr156 carries the post-translational modification Phosphothreonine. Ser163 and Ser178 each carry phosphoserine. The segment covering 199–208 (TDLRKAAGRK) has biased composition (basic and acidic residues).

Belongs to the histone H1/H5 family. Phosphorylated in early spermatids. In terms of processing, citrullination at Arg-56 (H1R54ci) by PADI4 takes place within the DNA-binding site of H1 and results in its displacement from chromatin and global chromatin decondensation, thereby promoting pluripotency and stem cell maintenance. Testis-specific.

It is found in the nucleus. Its subcellular location is the chromosome. Testis-specific histone H1 that forms less compacted chromatin compared to other H1 histone subtypes. Formation of more relaxed chromatin may be required to promote chromatin architecture required for proper chromosome regulation during meiosis, such as homologous recombination. Histones H1 act as linkers that bind to nucleosomes and compact polynucleosomes into a higher-order chromatin configuration. In Mus musculus (Mouse), this protein is Histone H1t.